A 375-amino-acid polypeptide reads, in one-letter code: Chaperone protein DnaJ (375 aa).

In terms of domain architecture, J spans 5–70 (DYYEVLGVER…GKRMAYDQYG (66 aa)). The CR-type zinc finger occupies 134 to 212 (GTTVTIRVPT…CHGQGRVEEH (79 aa)). Residues cysteine 147, cysteine 150, cysteine 164, cysteine 167, cysteine 186, cysteine 189, cysteine 200, and cysteine 203 each coordinate Zn(2+). CXXCXGXG motif repeat units lie at residues 147 to 154 (CKTCDGSG), 164 to 171 (CTTCGGIG), 186 to 193 (CPRCHGSG), and 200 to 207 (CPDCHGQG).

Belongs to the DnaJ family. In terms of assembly, homodimer. Requires Zn(2+) as cofactor.

The protein resides in the cytoplasm. Functionally, participates actively in the response to hyperosmotic and heat shock by preventing the aggregation of stress-denatured proteins and by disaggregating proteins, also in an autonomous, DnaK-independent fashion. Unfolded proteins bind initially to DnaJ; upon interaction with the DnaJ-bound protein, DnaK hydrolyzes its bound ATP, resulting in the formation of a stable complex. GrpE releases ADP from DnaK; ATP binding to DnaK triggers the release of the substrate protein, thus completing the reaction cycle. Several rounds of ATP-dependent interactions between DnaJ, DnaK and GrpE are required for fully efficient folding. Also involved, together with DnaK and GrpE, in the DNA replication of plasmids through activation of initiation proteins. In Azotobacter vinelandii (strain DJ / ATCC BAA-1303), this protein is Chaperone protein DnaJ.